The primary structure comprises 511 residues: Glucans biosynthesis protein G (511 aa).

Positions 1-22 (MMKMRWLSAAVMLTLYTSSSWA) are cleaved as a signal peptide.

Belongs to the OpgD/OpgG family.

The protein resides in the periplasm. It participates in glycan metabolism; osmoregulated periplasmic glucan (OPG) biosynthesis. Involved in the biosynthesis of osmoregulated periplasmic glucans (OPGs). The sequence is that of Glucans biosynthesis protein G from Shigella dysenteriae serotype 1 (strain Sd197).